The sequence spans 141 residues: ATP synthase epsilon chain (141 aa).

The protein belongs to the ATPase epsilon chain family. F-type ATPases have 2 components, CF(1) - the catalytic core - and CF(0) - the membrane proton channel. CF(1) has five subunits: alpha(3), beta(3), gamma(1), delta(1), epsilon(1). CF(0) has three main subunits: a, b and c.

It is found in the cell inner membrane. In terms of biological role, produces ATP from ADP in the presence of a proton gradient across the membrane. This Pseudomonas aeruginosa (strain LESB58) protein is ATP synthase epsilon chain.